A 259-amino-acid polypeptide reads, in one-letter code: MQLQLICEDAALQPYLDAIASKWQLTHDAHSHFALVLTFERLELRKLDEPKLGAIYVDLAGGAVAHRRKFGGGKGQAIAKAAGLNKGATPTVLDGTAGLGRDAFVLASLGCKVQMVERNPVVAALLDDGLTRAKKDDEIGAWVSERMSLLHASSHDALAALASDAEFVHPDVVYLDPMYPHPENKKKTALVKKEMRVFQSLVGADTDADALLTPALALATKRVVVKRPDYAEWLDGVKPSMAIETKKNRFDVYVNASMS.

S-adenosyl-L-methionine contacts are provided by residues 101–102, 117–118, 153–154, and Asp176; these read RD, ER, and SS.

This sequence belongs to the methyltransferase superfamily. RsmJ family.

Its subcellular location is the cytoplasm. The catalysed reaction is guanosine(1516) in 16S rRNA + S-adenosyl-L-methionine = N(2)-methylguanosine(1516) in 16S rRNA + S-adenosyl-L-homocysteine + H(+). Specifically methylates the guanosine in position 1516 of 16S rRNA. This chain is Ribosomal RNA small subunit methyltransferase J, found in Vibrio vulnificus (strain YJ016).